The sequence spans 382 residues: Sphingoid long-chain base transporter RSB1 (382 aa).

Topologically, residues 1–34 (MSNATNNTLGSLLPQLEAAANSNSLYGGMVPNLR) are extracellular. N-linked (GlcNAc...) asparagine glycans are attached at residues N3 and N6. A helical transmembrane segment spans residues 35 to 55 (FNITMIVIWGILLTIHVVQLL). At 56–57 (MR) the chain is on the cytoplasmic side. Residues 58 to 78 (QYWFSIAFICTGILEVLGFIG) form a helical membrane-spanning segment. Residues 79-90 (RTWSHSNVADMD) are Extracellular-facing. Residues 91–111 (AFLLNMICLTIAPVFTMGGIY) traverse the membrane as a helical segment. At 112 to 135 (YQLAKLIEVYGHRFSLLPSPMAYS) the chain is on the cytoplasmic side. The helical transmembrane segment at 136-156 (FIFICSDIVSLVVQAVGGGLC) threads the bilayer. Residues 157-171 (GVAVTDGTSTTTGNH) are Extracellular-facing. A helical transmembrane segment spans residues 172–192 (VFIAGLAIQVASMAIFLMLWF). The Cytoplasmic segment spans residues 193–241 (HFLFRIYISVRWEHINSRPISLSLLKISQTEVDYLYREKFHFLRLEPKR). The helical transmembrane segment at 242 to 262 (WVFHYFNLAITVAVLTIFTRC) threads the bilayer. At 263–281 (CYRLAELVVGWDGYLITHE) the chain is on the extracellular side. A helical transmembrane segment spans residues 282–302 (WYFIILDALMMAIATVTLTIF). The Cytoplasmic segment spans residues 303-382 (HPGFAFKGKS…LFSSKKKAKL (80 aa)).

Belongs to the lipid-translocating exporter (LTE) (TC 9.A.26.1) family.

Its subcellular location is the cell membrane. Catalyzes the ATP-dependent translocation of sphingoid long-chain bases (LCBs) from the cytoplasmic site toward the extracytoplasmic side of the membrane (flip-flop). Involved in the establishment of the functional lipid asymmetry of the plasma membrane. Regulates intracellular levels of LCBs, sphingolipid precursors that are growth inhibitory at increased levels. The chain is Sphingoid long-chain base transporter RSB1 (RSB1) from Saccharomyces cerevisiae (strain JAY291) (Baker's yeast).